Reading from the N-terminus, the 337-residue chain is MGKIKIGINGFGRIGRLVARVALQSEDVELVAVNDPFITTDYMTYMFKYDTVHGQWKHSDIKIKDSKTLLLGEKPVTVFGIRNPDEIPWAEAGAEYVVESTGVFTDKEKAAAHLKGGAKKVVISAPSKDAPMFVCGVNEDKYTSDIDIVSNASCTTNCLAPLAKVIHDNFGIIEGLMTTVHAITATQKTVDGPSSKDWRGGRAASFNIIPSSTGAAKAVGKVLPDLNGKLTGMSFRVPTVDVSVVDLTVRIEKAASYDAIKSAIKSASEGKLKGIIGYVEEDLVSTDFVGDSRSSIFDAKAGIALNDNFVKLVAWYDNEWGYSNRVIDLIRHMAKTQ.

NAD(+) is bound by residues 13 to 14 (RI), Asp-35, and Arg-82. D-glyceraldehyde 3-phosphate is bound by residues 153 to 155 (SCT), Thr-184, 213 to 214 (TG), and Arg-236. Cys-154 acts as the Nucleophile in catalysis. Asn-318 lines the NAD(+) pocket.

The protein belongs to the glyceraldehyde-3-phosphate dehydrogenase family. Homotetramer. Post-translationally, phosphorylated after gibberellin treatment.

Its subcellular location is the cytoplasm. The catalysed reaction is D-glyceraldehyde 3-phosphate + phosphate + NAD(+) = (2R)-3-phospho-glyceroyl phosphate + NADH + H(+). It participates in carbohydrate degradation; glycolysis; pyruvate from D-glyceraldehyde 3-phosphate: step 1/5. Its function is as follows. Key enzyme in glycolysis that catalyzes the first step of the pathway by converting D-glyceraldehyde 3-phosphate (G3P) into 3-phospho-D-glyceroyl phosphate. Essential for the maintenance of cellular ATP levels and carbohydrate metabolism. This Oryza sativa subsp. japonica (Rice) protein is Glyceraldehyde-3-phosphate dehydrogenase 1, cytosolic (GAPC1).